The sequence spans 284 residues: Probable O-methyltransferase ustE (284 aa).

N-linked (GlcNAc...) asparagine glycosylation is found at N22 and N29. Helical transmembrane passes span 88 to 108 (LLLL…VLTV) and 157 to 177 (YLAT…VCEI). N205 carries N-linked (GlcNAc...) asparagine glycosylation. A helical membrane pass occupies residues 215 to 235 (GLALASGGMIYGMSIAMFFMW). N-linked (GlcNAc...) asparagine glycosylation occurs at N264.

This sequence belongs to the class VI-like SAM-binding methyltransferase superfamily. Isoprenylcysteine carboxyl methyltransferase family.

The protein resides in the membrane. It participates in secondary metabolite biosynthesis. Probable O-methyltransferase; part of the gene cluster that mediates the biosynthesis of ustilaginoidins, dimeric gamma-naphthopyrones isolated from different fungal species. The first step in the biosynthesis of ustilaginoidins is the production of gamma-naphthopyrone precursor YWA1 by the non-reducing polyketide synthase ustP, via condensation of one acetyl-CoA starter unit with 6 malonyl-CoA units. YWA1 is then probably substrate of the ustZ to yield norrubrofusarin via a dehydration reaction. A key enzyme in the biosynthetic pathway is the laccase ustL, which catalyzes the oxidative dimerization of norrubrofusarin to ustilaginoidin A. It can produce the M- and P-atropisomers in varying amounts, depending on the reaction conditions. For the biosynthesis of 3-methylustilaginoid in derivatives such as chaetochromin A, a methylated derivative of YWA1 is required. The C-methylation is considered to be catalyzed by ustM, the phosphopantetheine attachment site of which indicates that it acts on the growing polyketide chain before release of the product. For the biosynthesis of chaetochromin A, it is assumed that saturation of the D2 double bond takes place before dimerization, and is probably catalyzed by an external reductase because no candidate gene was identified within the cluster. This is Probable O-methyltransferase ustE from Ustilaginoidea virens (Rice false smut fungus).